Reading from the N-terminus, the 194-residue chain is ATP synthase subunit 5, mitochondrial (194 aa).

F-type ATP synthases have 2 components, the catalytic core F(1) and the membrane-embedded component F(0), linked together by a central stalk and a peripheral stalk. The central stalk, also called rotor shaft, is often seen as part of F(1). The peripheral stalk is seen as part of F(0). F(0) contains the membrane channel next to the rotor. F-type ATP synthases form dimers but each monomer functions independently in ATP generation. The dimer consists of 18 different polypeptides: ATP1 (subunit alpha, part of F(1), 3 molecules per monomer), ATP2 (subunit beta, part of F(1), 3 molecules per monomer), ATP3 (subunit gamma, part of the central stalk), ATP4 (subunit b, part of the peripheral stalk), ATP5/OSCP (subunit 5/OSCP, part of the peripheral stalk), ATP6 (subunit a, part of the peripheral stalk), ATP7 (subunit d, part of the peripheral stalk), ATP8 (subunit 8, part of the peripheral stalk), OLI1 (subunit c, part of the rotor, 10 molecules per monomer), ATP14 (subunit h, part of the peripheral stalk), ATP15 (subunit epsilon, part of the central stalk), ATP16 (subunit delta, part of the central stalk), ATP17 (subunit f, part of the peripheral stalk), ATP18 (subunit i/j, part of the peripheral stalk). Dimer-specific subunits are ATP19 (subunit k, at interface between monomers), ATP20 (subunit g, at interface between monomers), TIM11 (subunit e, at interface between monomers). Also contains subunit L.

Its subcellular location is the mitochondrion inner membrane. Its function is as follows. Mitochondrial membrane ATP synthase (F(1)F(0) ATP synthase or Complex V) produces ATP from ADP in the presence of a proton gradient across the membrane which is generated by electron transport complexes of the respiratory chain. F-type ATP synthases consist of two structural domains, F(1) - containing the extramembraneous catalytic core, and F(0) - containing the membrane proton channel, linked together by a central stalk and a peripheral stalk. During catalysis, ATP synthesis in the catalytic domain of F(1) is coupled via a rotary mechanism of the central stalk subunits to proton translocation. Part of the complex F(0) domain and the peripheral stalk, which acts as a stator to hold the catalytic alpha/ATP1(3)beta/ATP2(3) subcomplex and subunit a/ATP6 static relative to the rotary elements. This is ATP synthase subunit 5, mitochondrial from Pichia angusta (Yeast).